A 914-amino-acid chain; its full sequence is MVGIFNIVIDEENFKVLDSSLHFEVEAGLMYPSVSVVSWMGLANVFEAGMNASILILPKDAFGNNISFSGKKMEFQEFSLSLISENGSFAGVLNSTHIRWIVSGYISIDFVLVTSGKFLLLVEKESQTLNGGPLPLEVNSGPLDVSNCVSIWKSELSTWQIFSKMEILLHQKDRFGNIVSGFYEFDADVVEVETGLSIPVADFQFEYVEPGIQLMSFTLSEPGNFLLTLSDMKHNKSISSMPYVYTVYIGYCDGSRSIVNGSGINASIAGESLGFSVYLKDAYGYPSPVQVDRLQVRIVLEIDSSIILPTIQPREALNGTGSSHQAATPLYEKHGGRASGNLVTQASIFDVTYTPKRTGIYRIFISSGNIVLNGGQPFIKEVYAGEVNVAACSVTQFNGKVPKEIKNEIVVLLLDGFYNPVPSQPSRLKFEITSANTSSFTTWEFVDNNDGTYTGSYLAMEVGTYRMCISFDNKHIQPCPFDVNVYSNGYFPRAYDDPVNVWEDESISFNPLENDYFAGDNASMLGFSQPGHGSLLRDGNLLRYTPMKNFSGNDSFLYTIADINGNLAAATVYIFVLTAPPQFVSFSGGLQATEDLISPRYGGFSGLEISYSDLLENISVMVQALSGSVILSPMLMQFRPPGSGKLSVSNGGEDRRVLILEGQVGVINPALQSIQYLGNENFAGVDSLRLSTKNKNGINHLDVPVFVEPVNDPPFINVPQYIMLESNGSESLIFHPERDKFNFSVGDPDLVNFPGGESHFLVTFSLEVTDGFLLTNLPSELINSTELKFKNLFQWQPIQTYAAISKHVNVKASGIRFRGTIRQCNDLMQQLLHRGGENGAVLTLKLSDMGNYGCFLDCTERISLPLHAEARVNLIRKRPLSSLGAHGTFMKYLVVVPFSFFSIKLFSLLMVLIG.

2 Filamin repeats span residues 249–382 and 391–485; these read IGYC…IKEV and ACSV…DVNV. The helical transmembrane segment at 893 to 913 threads the bilayer; it reads LVVVPFSFFSIKLFSLLMVLI.

In terms of tissue distribution, in tricellular pollen, expressed in mature sperm cells but not in the vegetative cell. In bicellular pollen, detected in the progenitor generative cell. Detected in the egg cell within the female gametophyte.

Its subcellular location is the cell membrane. This is Protein GAMETE EXPRESSED 2 (GEX2) from Arabidopsis thaliana (Mouse-ear cress).